We begin with the raw amino-acid sequence, 366 residues long: Transcription factor MYB28 (366 aa).

2 HTH myb-type domains span residues 9-61 (GEGL…TNYL) and 62-116 (KPEI…KKRL). 2 consecutive DNA-binding regions (H-T-H motif) follow at residues 37-61 (WRDI…TNYL) and 89-112 (WSVI…NTHL). The segment at 124–170 (VTHKPLASSSNPTVDENLNSPNASSSDKQYSRSSSMPFLSRPPPSSC) is disordered. The segment covering 130 to 146 (ASSSNPTVDENLNSPNA) has biased composition (polar residues). Residues 147–158 (SSSDKQYSRSSS) are compositionally biased toward low complexity.

As to quaternary structure, can form complexes with MYC2, MYC3 or MYC4. In terms of tissue distribution, expressed in generative organs, mature leaves and trichomes.

It localises to the nucleus. Functionally, major regulator of short-chained aliphatic glucosinolates (GLSs) biosynthesis. Together with MYB29/HAG3 and MYB76/HAG2, promotes aliphatic glucosinolate biosynthesis but represses indolic glucosinolate biosynthesis. Prevents insect performance (e.g. lepidopteran insect Mamestra brassicae and Spodoptera exigua) by promoting glucosinolates. The polypeptide is Transcription factor MYB28 (MYB28) (Arabidopsis thaliana (Mouse-ear cress)).